The chain runs to 136 residues: DNA-directed RNA polymerase subunit omega (136 aa).

This sequence belongs to the RNA polymerase subunit omega family. As to quaternary structure, the RNAP catalytic core consists of 2 alpha, 1 beta, 1 beta' and 1 omega subunit. When a sigma factor is associated with the core the holoenzyme is formed, which can initiate transcription.

It catalyses the reaction RNA(n) + a ribonucleoside 5'-triphosphate = RNA(n+1) + diphosphate. Promotes RNA polymerase assembly. Latches the N- and C-terminal regions of the beta' subunit thereby facilitating its interaction with the beta and alpha subunits. This Acidiphilium cryptum (strain JF-5) protein is DNA-directed RNA polymerase subunit omega.